The primary structure comprises 1687 residues: A-kinase anchor protein SPHKAP (1687 aa).

The span at 1-14 (MDVNSRLSVQSNVE) shows a compositional bias: polar residues. Disordered stretches follow at residues 1–25 (MDVNSRLSVQSNVESPLMHEGPEPQ) and 272–293 (RKHRTPSTKTEGSKENTEENTS). Residues 914–931 (FAEELAETVVSMATEIAA) are PKA-RII subunit binding domain. Positions 964 to 989 (LKRKKENSSAGSTVRKHKPPRLSEIK) are disordered. S1010, S1070, S1092, S1105, S1106, S1109, S1244, and S1273 each carry phosphoserine. Disordered regions lie at residues 1363–1406 (VTEG…SPRR) and 1421–1520 (DQKE…PDDT). The segment covering 1366 to 1375 (GNHSPVSSPG) has biased composition (polar residues). Basic and acidic residues predominate over residues 1382 to 1393 (KPSDFDPRRETS). Residues 1461–1470 (TAPSTCQSSR) are compositionally biased toward polar residues. Over residues 1482-1494 (EVLKEDIPRDESR) the composition is skewed to basic and acidic residues. The segment covering 1495-1508 (NPPSSSEESTGSWS) has biased composition (low complexity).

This sequence belongs to the AKAP110 family. In terms of assembly, interacts (via the PKA-RII subunit binding domain) with the RI subunit of PKA. Interacts with SPHK1; the interaction greatly reduces SPHK1 activity.

Its subcellular location is the cytoplasm. Functionally, anchoring protein that binds preferentially to the type I regulatory subunit of c-AMP-dependent protein kinase (PKA type I) and targets it to distinct subcellular compartments. May act as a converging factor linking cAMP and sphingosine signaling pathways. Plays a regulatory role in the modulation of SPHK1. The sequence is that of A-kinase anchor protein SPHKAP (Sphkap) from Mus musculus (Mouse).